A 197-amino-acid polypeptide reads, in one-letter code: Xanthine phosphoribosyltransferase (197 aa).

Leu20 and Thr27 together coordinate xanthine. 128–132 (ANGQA) provides a ligand contact to 5-phospho-alpha-D-ribose 1-diphosphate. Lys156 is a binding site for xanthine.

This sequence belongs to the purine/pyrimidine phosphoribosyltransferase family. Xpt subfamily. As to quaternary structure, homodimer.

It is found in the cytoplasm. It carries out the reaction XMP + diphosphate = xanthine + 5-phospho-alpha-D-ribose 1-diphosphate. It participates in purine metabolism; XMP biosynthesis via salvage pathway; XMP from xanthine: step 1/1. In terms of biological role, converts the preformed base xanthine, a product of nucleic acid breakdown, to xanthosine 5'-monophosphate (XMP), so it can be reused for RNA or DNA synthesis. This chain is Xanthine phosphoribosyltransferase, found in Lactococcus lactis subsp. cremoris (strain SK11).